The sequence spans 354 residues: Biotin synthase (354 aa).

One can recognise a Radical SAM core domain in the interval 41–265; it reads NEVQISRLLS…LMPHSRVRLS (225 aa). Cys56, Cys60, and Cys63 together coordinate [4Fe-4S] cluster. [2Fe-2S] cluster contacts are provided by Cys100, Cys131, Cys191, and Arg263.

The protein belongs to the radical SAM superfamily. Biotin synthase family. Homodimer. [4Fe-4S] cluster serves as cofactor. [2Fe-2S] cluster is required as a cofactor.

The catalysed reaction is (4R,5S)-dethiobiotin + (sulfur carrier)-SH + 2 reduced [2Fe-2S]-[ferredoxin] + 2 S-adenosyl-L-methionine = (sulfur carrier)-H + biotin + 2 5'-deoxyadenosine + 2 L-methionine + 2 oxidized [2Fe-2S]-[ferredoxin]. It functions in the pathway cofactor biosynthesis; biotin biosynthesis; biotin from 7,8-diaminononanoate: step 2/2. Catalyzes the conversion of dethiobiotin (DTB) to biotin by the insertion of a sulfur atom into dethiobiotin via a radical-based mechanism. This is Biotin synthase from Shewanella woodyi (strain ATCC 51908 / MS32).